Reading from the N-terminus, the 806-residue chain is Lysine-specific demethylase JMJ15 (806 aa).

Residues 1-43 (MEPFSAAQNKEDKDTSVEPPRRRCHRKNKGTNVEPPSSPYHPK) are disordered. A compositionally biased stretch (basic and acidic residues) spans 9–21 (NKEDKDTSVEPPR). In terms of domain architecture, JmjN spans 61 to 102 (APVFHPTSEEFEDTLAYIEKIRPLAESFGICRIVPPSNWSPP). The segment at 128–176 (NRGPVKKKTPKGRKRKRGKYSRTVAPKKRNGSVSKSVSTPKATEEENFG) is disordered. The span at 131–157 (PVKKKTPKGRKRKRGKYSRTVAPKKRN) shows a compositional bias: basic residues. Positions 132-139 (VKKKTPKG) match the Nuclear localization signal motif. The segment covering 158–168 (GSVSKSVSTPK) has biased composition (polar residues). The JmjC domain maps to 261–427 (KYISSGWNLN…HGQNAVEIYS (167 aa)). Residues His307, Glu309, and His395 each contribute to the Fe cation site. Residues Cys514, Cys517, Cys528, Cys531, Cys539, His542, Cys545, and Cys547 each coordinate Zn(2+). The C5HC2 zinc-finger motif lies at 514–566 (CISCFSDLHLSATGCKNCSSLEEYGCTKHDICSCEGKDRFIFLRYTIDELSSL). In terms of domain architecture, FYR N-terminal spans 629 to 687 (IMDLAAYHVEPINLGFLVVGKLWCNKHAIFPKGFKSRVKFYNVQDPMRISYYVSEIVDA). Residues 689-775 (LLGPLFKVTL…HGQVEYWNHK (87 aa)) enclose the FYR C-terminal domain.

Belongs to the JARID1 histone demethylase family. Fe(2+) is required as a cofactor. As to expression, expressed in roots, cotyledons, shoot apex, rosette and cauline leaves, stems, inflorescences and siliques. Expressed at low levels during vegetative growth but to higher levels in young floral organs.

The protein resides in the nucleus. It catalyses the reaction N(6),N(6),N(6)-trimethyl-L-lysyl(4)-[histone H3] + 2-oxoglutarate + O2 = N(6),N(6)-dimethyl-L-lysyl(4)-[histone H3] + formaldehyde + succinate + CO2. In terms of biological role, histone demethylase that demethylates 'Lys-4' (H3K4me) of histone H3 with a specific activity for H3K4me3. No activity on H3K4me2, H3K4me1, H3K9me3/2, H3K27me3/2 and H3K36me3/2. Involved in the control of flowering time by demethylating H3K4me3 at the FLC locus and repressing its expression. The repression of FLC level and reduction in H3K4me3 at the FLC locus results in induction of the flowering activator FT, which is a downstream target of FLC. Promotes salt tolerance by down-regulating the expression of several transcriptions factors involved in stress responses via H3K4me3 and H3K4me2 demethylation. The sequence is that of Lysine-specific demethylase JMJ15 from Arabidopsis thaliana (Mouse-ear cress).